We begin with the raw amino-acid sequence, 126 residues long: Protein ApaG (126 aa).

The region spanning 2-126 (SFPIDSIKIK…FRLAMPGVMQ (125 aa)) is the ApaG domain.

The chain is Protein ApaG from Shewanella denitrificans (strain OS217 / ATCC BAA-1090 / DSM 15013).